A 403-amino-acid chain; its full sequence is S-adenosylmethionine synthase (403 aa).

An ATP-binding site is contributed by His15. A Mg(2+)-binding site is contributed by Asp17. Glu43 serves as a coordination point for K(+). The L-methionine site is built by Glu56 and Gln99. Residues 99 to 109 (QSPDINQGVDR) are flexible loop. ATP contacts are provided by residues 166–168 (DAK), 232–233 (KF), Asp241, 247–248 (RK), Ala264, and Lys268. An L-methionine-binding site is contributed by Asp241. L-methionine is bound at residue Lys272.

It belongs to the AdoMet synthase family. In terms of assembly, homotetramer; dimer of dimers. The cofactor is Mg(2+). K(+) is required as a cofactor.

The protein resides in the cytoplasm. It catalyses the reaction L-methionine + ATP + H2O = S-adenosyl-L-methionine + phosphate + diphosphate. It functions in the pathway amino-acid biosynthesis; S-adenosyl-L-methionine biosynthesis; S-adenosyl-L-methionine from L-methionine: step 1/1. In terms of biological role, catalyzes the formation of S-adenosylmethionine (AdoMet) from methionine and ATP. The overall synthetic reaction is composed of two sequential steps, AdoMet formation and the subsequent tripolyphosphate hydrolysis which occurs prior to release of AdoMet from the enzyme. This chain is S-adenosylmethionine synthase, found in Xylella fastidiosa (strain M12).